The primary structure comprises 231 residues: uncharacterized protein (231 aa).

Helical transmembrane passes span 39–59 (FCIS…YGPF), 70–90 (ALSL…VPVI), 156–176 (AIIS…GGSI), and 189–206 (IVAI…NMFF).

It belongs to the FliR/MopE/SpaR family.

Its subcellular location is the cell membrane. This is an uncharacterized protein from Escherichia coli (strain K12).